Reading from the N-terminus, the 609-residue chain is Adenine deaminase (609 aa).

Belongs to the metallo-dependent hydrolases superfamily. Adenine deaminase family. Mn(2+) serves as cofactor.

The enzyme catalyses adenine + H2O + H(+) = hypoxanthine + NH4(+). The polypeptide is Adenine deaminase (Cenarchaeum symbiosum (strain A)).